A 415-amino-acid polypeptide reads, in one-letter code: Corticotropin-releasing factor receptor 1 (415 aa).

Residues methionine 1–threonine 23 form the signal peptide. Residues serine 24 to lysine 111 are Extracellular-facing. 3 cysteine pairs are disulfide-bonded: cysteine 30–cysteine 54, cysteine 44–cysteine 87, and cysteine 68–cysteine 102. 5 N-linked (GlcNAc...) asparagine glycosylation sites follow: asparagine 38, asparagine 45, asparagine 78, asparagine 90, and asparagine 98. The segment at tyrosine 99–glutamate 108 is important for peptide agonist binding. The chain crosses the membrane as a helical span at residues serine 112–leucine 142. Residues arginine 143–cysteine 149 are Cytoplasmic-facing. The helical transmembrane segment at leucine 150–leucine 174 threads the bilayer. The Extracellular segment spans residues threonine 175–arginine 189. The cysteines at positions 188 and 258 are disulfide-linked. The helical transmembrane segment at leucine 190–valine 218 threads the bilayer. Over leucine 219–arginine 225 the chain is Cytoplasmic. The chain crosses the membrane as a helical span at residues leucine 226–tyrosine 253. Topologically, residues aspartate 254 to aspartate 269 are extracellular. The chain crosses the membrane as a helical span at residues tyrosine 270–methionine 295. Positions leucine 280–isoleucine 290 are important for antagonist binding. The Cytoplasmic segment spans residues threonine 296–threonine 306. Serine 301 is subject to Phosphoserine; by PKA. Residues isoleucine 307 to phenylalanine 331 form a helical membrane-spanning segment. Residues valine 332–glutamate 338 lie on the Extracellular side of the membrane. A helical transmembrane segment spans residues valine 339–serine 368. At glutamate 369–valine 415 the chain is on the cytoplasmic side.

It belongs to the G-protein coupled receptor 2 family. As to quaternary structure, heterodimer; heterodimerizes with GPER1. Interacts (via N-terminal extracellular domain) with CRH and UCN. Interacts with DLG1; this inhibits endocytosis of CRHR1 after agonist binding. C-terminal Ser or Thr residues may be phosphorylated. In terms of processing, phosphorylation at Ser-301 by PKA prevents maximal coupling to Gq-protein, and thereby negatively regulates downstream signaling. In terms of tissue distribution, detected in brain cortex (at protein level).

Its subcellular location is the cell membrane. The protein localises to the endosome. Functionally, G-protein coupled receptor for CRH (corticotropin-releasing factor) and UCN (urocortin). Has high affinity for CRH and UCN. Ligand binding causes a conformation change that triggers signaling via guanine nucleotide-binding proteins (G proteins) and down-stream effectors, such as adenylate cyclase. Promotes the activation of adenylate cyclase, leading to increased intracellular cAMP levels. Inhibits the activity of the calcium channel CACNA1H. Required for normal embryonic development of the adrenal gland and for normal hormonal responses to stress. Plays a role in the response to anxiogenic stimuli. The sequence is that of Corticotropin-releasing factor receptor 1 (Crhr1) from Mus musculus (Mouse).